Reading from the N-terminus, the 421-residue chain is Ig-like V-type domain-containing protein FAM187A (421 aa).

An N-terminal signal peptide occupies residues 1 to 18 (MNLAHTTVLLWAWGSLQA). Residues 19–377 (FEIVEKENIF…VSFSDPETRA (359 aa)) lie on the Extracellular side of the membrane. Residues 268-362 (PWLPQVPIQF…IAGFRLGVTS (95 aa)) enclose the Ig-like V-type domain. A disulfide bond links Cys-290 and Cys-346. Asn-318 carries N-linked (GlcNAc...) asparagine glycosylation. A helical membrane pass occupies residues 378-398 (ALGLILIGYMLITVIFISIHL). Topologically, residues 399 to 421 (CRCCCYLFRFCPNFSPRLSRPQL) are cytoplasmic.

The protein belongs to the FAM187 family.

Its subcellular location is the membrane. The polypeptide is Ig-like V-type domain-containing protein FAM187A (FAM187A) (Bos taurus (Bovine)).